A 216-amino-acid chain; its full sequence is Peptide methionine sulfoxide reductase MsrA (216 aa).

C54 is a catalytic residue.

It belongs to the MsrA Met sulfoxide reductase family.

It carries out the reaction L-methionyl-[protein] + [thioredoxin]-disulfide + H2O = L-methionyl-(S)-S-oxide-[protein] + [thioredoxin]-dithiol. It catalyses the reaction [thioredoxin]-disulfide + L-methionine + H2O = L-methionine (S)-S-oxide + [thioredoxin]-dithiol. Its function is as follows. Has an important function as a repair enzyme for proteins that have been inactivated by oxidation. Catalyzes the reversible oxidation-reduction of methionine sulfoxide in proteins to methionine. The sequence is that of Peptide methionine sulfoxide reductase MsrA from Xanthomonas campestris pv. campestris (strain ATCC 33913 / DSM 3586 / NCPPB 528 / LMG 568 / P 25).